Reading from the N-terminus, the 75-residue chain is Lipid-anchored plasma membrane protein CPP2 (75 aa).

Positions 1–43 (MSQQQGYYQQGPPQQGYYQQGPPQQGYYQQGPPQQGYPQQQPV) are disordered. 3 consecutive repeat copies span residues 4–13 (QQGYYQQGPP), 14–23 (QQGYYQQGPP), and 24–33 (QQGYYQQGPP). The 3 X 10 AA tandem repeats of Q-Q-G-Y-Y-Q-Q-G-P-P stretch occupies residues 4-33 (QQGYYQQGPPQQGYYQQGPPQQGYYQQGPP).

The protein belongs to the CYSTM1 family. Palmitoylated near the C-terminus.

It is found in the cell membrane. The chain is Lipid-anchored plasma membrane protein CPP2 from Saccharomyces cerevisiae (strain ATCC 204508 / S288c) (Baker's yeast).